Consider the following 24-residue polypeptide: Positive regulator of RepFIC repA1 expression (24 aa).

This is Positive regulator of RepFIC repA1 expression (repL) from Escherichia coli (strain K12).